We begin with the raw amino-acid sequence, 407 residues long: Peptidase T (407 aa).

Residue H81 participates in Zn(2+) binding. Residue D83 is part of the active site. Residue D142 participates in Zn(2+) binding. The active-site Proton acceptor is the E176. Zn(2+)-binding residues include E177, D199, and H381.

The protein belongs to the peptidase M20B family. Zn(2+) serves as cofactor.

Its subcellular location is the cytoplasm. It carries out the reaction Release of the N-terminal residue from a tripeptide.. Cleaves the N-terminal amino acid of tripeptides. This Streptococcus pneumoniae (strain JJA) protein is Peptidase T.